We begin with the raw amino-acid sequence, 132 residues long: uncharacterized protein (132 aa).

The disordered stretch occupies residues L113–R132.

This is an uncharacterized protein from Saccharomyces cerevisiae (strain ATCC 204508 / S288c) (Baker's yeast).